The sequence spans 86 residues: Exodeoxyribonuclease 7 small subunit (86 aa).

The disordered stretch occupies residues 1 to 26 (MQDELFETEKAPQKNTKNAKNAPKKS).

Belongs to the XseB family. Heterooligomer composed of large and small subunits.

Its subcellular location is the cytoplasm. The enzyme catalyses Exonucleolytic cleavage in either 5'- to 3'- or 3'- to 5'-direction to yield nucleoside 5'-phosphates.. Bidirectionally degrades single-stranded DNA into large acid-insoluble oligonucleotides, which are then degraded further into small acid-soluble oligonucleotides. The chain is Exodeoxyribonuclease 7 small subunit from Helicobacter pylori (strain Shi470).